Consider the following 756-residue polypeptide: Phosphate transporter PHO1 homolog 6 (756 aa).

Positions 1–303 (MKFGKDFSSE…SRDAAKSYMK (303 aa)) constitute an SPX domain. The Cytoplasmic segment spans residues 1 to 355 (MKFGKDFSSE…KPKRERHRLT (355 aa)). The helical transmembrane segment at 356 to 376 (FSTGFLGGCMFSLIVALVAIV) threads the bilayer. The Extracellular segment spans residues 377 to 396 (RTRNILQDDGQKQYMNTMFP). Residues 397–417 (LYSLFGFIMLHMTMYAANIYF) form a helical membrane-spanning segment. The Cytoplasmic segment spans residues 418 to 440 (WRQYRVNYSFIFGFKQGTELGYK). The chain crosses the membrane as a helical span at residues 441-461 (QVLFVGFSIGALALLCVLANL). Residues 462–477 (DMETDPKTKDYQALTE) are Extracellular-facing. Residues 478-498 (LLPLFLLIAMFVVLVVPFNIF) traverse the membrane as a helical segment. Topologically, residues 499 to 631 (YRSSRFFFLT…DEKDRQIIWR (133 aa)) are cytoplasmic. The EXS domain occupies 562 to 756 (KDSQVFNTFL…SLPFNYEVDH (195 aa)). Residues 632–652 (LLGGITSAMAVVFCTYWDLVY) form a helical membrane-spanning segment. Residues 653–676 (DWGLLNRTSKNPWLRDNLLIPHKE) lie on the Extracellular side of the membrane. The chain crosses the membrane as a helical span at residues 677–697 (VYVLAMILNVVLRFAWMQTVL). The Cytoplasmic segment spans residues 698-756 (DFKFESIHTQTVVAVVASLEIIRRGIWNFFRLENEHLNNVGKYRAFKAVSLPFNYEVDH).

The protein belongs to the SYG1 (TC 2.A.94) family. In terms of tissue distribution, specifically expressed in anther connective tissue.

The protein resides in the cell membrane. Functionally, may transport inorganic phosphate (Pi). The polypeptide is Phosphate transporter PHO1 homolog 6 (PHO1-H6) (Arabidopsis thaliana (Mouse-ear cress)).